The following is a 282-amino-acid chain: tRNA (guanine-N(7)-)-methyltransferase (282 aa).

Positions 1-31 (MSLTDDQASKRQAYRAAKEANRKELKHVKID) are disordered. Over residues 16–31 (AAKEANRKELKHVKID) the composition is skewed to basic and acidic residues. Residues glycine 99, 122–123 (EI), 157–158 (NA), and cysteine 177 each bind S-adenosyl-L-methionine. Residue aspartate 180 is part of the active site. Residue 255 to 257 (TEE) participates in S-adenosyl-L-methionine binding.

It belongs to the class I-like SAM-binding methyltransferase superfamily. TrmB family. As to quaternary structure, forms a complex with TRM82.

It localises to the nucleus. It carries out the reaction guanosine(46) in tRNA + S-adenosyl-L-methionine = N(7)-methylguanosine(46) in tRNA + S-adenosyl-L-homocysteine. It functions in the pathway tRNA modification; N(7)-methylguanine-tRNA biosynthesis. Functionally, catalyzes the formation of N(7)-methylguanine at position 46 (m7G46) in tRNA. The protein is tRNA (guanine-N(7)-)-methyltransferase of Eremothecium gossypii (strain ATCC 10895 / CBS 109.51 / FGSC 9923 / NRRL Y-1056) (Yeast).